A 141-amino-acid chain; its full sequence is Large ribosomal subunit protein uL22 (141 aa).

Residues 108-141 (KSEEKKTVAKKTTTTKAPAKKTTSTKKATVKKES) form a disordered region. Low complexity predominate over residues 117-134 (KKTTTTKAPAKKTTSTKK).

The protein belongs to the universal ribosomal protein uL22 family. Part of the 50S ribosomal subunit.

Functionally, this protein binds specifically to 23S rRNA; its binding is stimulated by other ribosomal proteins, e.g. L4, L17, and L20. It is important during the early stages of 50S assembly. It makes multiple contacts with different domains of the 23S rRNA in the assembled 50S subunit and ribosome. The globular domain of the protein is located near the polypeptide exit tunnel on the outside of the subunit, while an extended beta-hairpin is found that lines the wall of the exit tunnel in the center of the 70S ribosome. The polypeptide is Large ribosomal subunit protein uL22 (Campylobacter jejuni subsp. jejuni serotype O:2 (strain ATCC 700819 / NCTC 11168)).